The chain runs to 302 residues: tRNA-cytidine(32) 2-sulfurtransferase (302 aa).

The PP-loop motif signature appears at 57–62 (SGGKDS). Residues Cys132, Cys135, and Cys223 each contribute to the [4Fe-4S] cluster site.

Belongs to the TtcA family. Homodimer. Requires Mg(2+) as cofactor. It depends on [4Fe-4S] cluster as a cofactor.

It is found in the cytoplasm. The enzyme catalyses cytidine(32) in tRNA + S-sulfanyl-L-cysteinyl-[cysteine desulfurase] + AH2 + ATP = 2-thiocytidine(32) in tRNA + L-cysteinyl-[cysteine desulfurase] + A + AMP + diphosphate + H(+). It participates in tRNA modification. Catalyzes the ATP-dependent 2-thiolation of cytidine in position 32 of tRNA, to form 2-thiocytidine (s(2)C32). The sulfur atoms are provided by the cysteine/cysteine desulfurase (IscS) system. This Marinobacter nauticus (strain ATCC 700491 / DSM 11845 / VT8) (Marinobacter aquaeolei) protein is tRNA-cytidine(32) 2-sulfurtransferase.